The sequence spans 32 residues: Dermatoxin-J3 (32 aa).

Position 32 is a glutamine amide (Q32).

Expressed by the skin glands.

It localises to the secreted. Antimicrobial peptide. In Phasmahyla jandaia (Jandaia leaf frog), this protein is Dermatoxin-J3.